We begin with the raw amino-acid sequence, 183 residues long: Ribosome rescue factor SmrB (183 aa).

A Smr domain is found at 98-173; that stretch reads LDLHGLTQLQ…GDAALLVLIE (76 aa).

Belongs to the SmrB family. Associates with collided ribosomes, but not with correctly translating polysomes.

Its function is as follows. Acts as a ribosome collision sensor. Detects stalled/collided disomes (pairs of ribosomes where the leading ribosome is stalled and a second ribosome has collided with it) and endonucleolytically cleaves mRNA at the 5' boundary of the stalled ribosome. Stalled/collided disomes form a new interface (primarily via the 30S subunits) that binds SmrB. Cleaved mRNA becomes available for tmRNA ligation, leading to ribosomal subunit dissociation and rescue of stalled ribosomes. This chain is Ribosome rescue factor SmrB, found in Escherichia coli O17:K52:H18 (strain UMN026 / ExPEC).